Reading from the N-terminus, the 887-residue chain is ABC transporter A family member 10 (887 aa).

Helical transmembrane passes span 38–58 (GIQY…VITL), 198–218 (YLYV…LLVT), 245–265 (IIIV…VVLY), 277–297 (VMLF…GIIL), 309–329 (AISS…QFYL), 335–355 (SSWL…EFLY), and 376–396 (ISFL…WYIT). A compositionally biased stretch (low complexity) spans 443–469 (NNCNNNNTSPSSSSSSQSSPLNKPLLS). A disordered region spans residues 443–474 (NNCNNNNTSPSSSSSSQSSPLNKPLLSGDSDD). Residues 481–728 (IRLVNLKKTY…FNLGYILTIV (248 aa)) form the ABC transporter domain. 519–526 (GQNGSGKT) is a binding site for ATP. The span at 774–797 (NNNNNENNSNNSDGSSSSSDSSSS) shows a compositional bias: low complexity. The disordered stretch occupies residues 774 to 799 (NNNNNENNSNNSDGSSSSSDSSSSKD).

It belongs to the ABC transporter superfamily. ABCA family.

Its subcellular location is the membrane. The chain is ABC transporter A family member 10 (abcA10) from Dictyostelium discoideum (Social amoeba).